The chain runs to 279 residues: MNKKNREVTSSWFTNLRDLVCAEFEKIEEEYAKAKGLKPGKFVRSSWERDGGGGGVMSVMKGKVFEKVGVNISTVFGEFSKAFRAEIPGAELDGKFFATGISLVAHLKSPLIPAMHFNTRYIETSKNWFGGGGDLTPFYPEEDETAKFHAAFKEACDKYDSGYYPKFKKQCDEYFYLKHRKEPRGVGGIFYDYLNSGNFEQDFSFTQDVGKALLSVYPEIVRNKLFLPWTDEQKEYQLIRRGRYVEFNLLYDRGTKFGLMTDGNVEAILMSLPPEVKWA.

Residue Ser-102 coordinates substrate. A divalent metal cation-binding residues include His-106 and His-116. The Proton donor role is filled by His-116. Position 118–120 (118–120) interacts with substrate; it reads NTR. The a divalent metal cation site is built by His-149 and His-179. The interval 244–279 is important for dimerization; that stretch reads YVEFNLLYDRGTKFGLMTDGNVEAILMSLPPEVKWA.

The protein belongs to the aerobic coproporphyrinogen-III oxidase family. Homodimer. Requires a divalent metal cation as cofactor.

It is found in the cytoplasm. The catalysed reaction is coproporphyrinogen III + O2 + 2 H(+) = protoporphyrinogen IX + 2 CO2 + 2 H2O. It functions in the pathway porphyrin-containing compound metabolism; protoporphyrin-IX biosynthesis; protoporphyrinogen-IX from coproporphyrinogen-III (O2 route): step 1/1. Involved in the heme biosynthesis. Catalyzes the aerobic oxidative decarboxylation of propionate groups of rings A and B of coproporphyrinogen-III to yield the vinyl groups in protoporphyrinogen-IX. This chain is Oxygen-dependent coproporphyrinogen-III oxidase, found in Rickettsia bellii (strain RML369-C).